Here is a 596-residue protein sequence, read N- to C-terminus: Elongation factor 4 (596 aa).

Positions 2-184 constitute a tr-type G domain; the sequence is KHIRNFSIIA…VIVEQIPPPE (183 aa). Residues 14 to 19 and 131 to 134 each bind GTP; these read DHGKST and NKID.

The protein belongs to the TRAFAC class translation factor GTPase superfamily. Classic translation factor GTPase family. LepA subfamily.

Its subcellular location is the cell inner membrane. The enzyme catalyses GTP + H2O = GDP + phosphate + H(+). In terms of biological role, required for accurate and efficient protein synthesis under certain stress conditions. May act as a fidelity factor of the translation reaction, by catalyzing a one-codon backward translocation of tRNAs on improperly translocated ribosomes. Back-translocation proceeds from a post-translocation (POST) complex to a pre-translocation (PRE) complex, thus giving elongation factor G a second chance to translocate the tRNAs correctly. Binds to ribosomes in a GTP-dependent manner. The sequence is that of Elongation factor 4 from Shewanella oneidensis (strain ATCC 700550 / JCM 31522 / CIP 106686 / LMG 19005 / NCIMB 14063 / MR-1).